The sequence spans 213 residues: Large ribosomal subunit protein uL1 (213 aa).

The protein belongs to the universal ribosomal protein uL1 family. Part of the 50S ribosomal subunit.

In terms of biological role, binds directly to 23S rRNA. Probably involved in E site tRNA release. Its function is as follows. Protein L1 is also a translational repressor protein, it controls the translation of its operon by binding to its mRNA. The polypeptide is Large ribosomal subunit protein uL1 (Methanococcus maripaludis (strain C5 / ATCC BAA-1333)).